Here is a 224-residue protein sequence, read N- to C-terminus: Inhibitor of apoptosis protein (224 aa).

The BIR repeat unit spans residues 29-92; the sequence is VDARNQSFAI…AFWSRNCGFM (64 aa). Residues Cys-62, Cys-65, His-82, and Cys-89 each contribute to the Zn(2+) site.

It belongs to the asfivirus IAP family. Interacts with subunit p17 of host CASP3.

It is found in the host cytoplasm. The protein resides in the virion. Its function is as follows. Prevents apoptosis of host cell by inhibiting caspase-3/CASP3 activation to promote the viral replication. Also induces the activation of host NF-kappaB. In African swine fever virus (isolate Tick/South Africa/Wildebeeslaagte M1/1996) (ASFV), this protein is Inhibitor of apoptosis protein (p27).